A 216-amino-acid polypeptide reads, in one-letter code: MYLKIPCNSIYHQFQPLFRARTVHKVRSLGLNGFYRKYHGFNSLRFVRVLQEAGIDDKKSETLMRLISNVYSDMHEKISDFSVTKEQQDRVMYQQKVDFAHLRSELQSIERQEMVALHSQVEQLFSDVERLKTSFRDQLNNSTSEARLQLNIDRLNHYDETASQDLKLRELSAEIDTEMSNFRTQLASFKTQTLQWVFGIVTGSGALLLAYVRLII.

Residues 111 to 133 (RQEMVALHSQVEQLFSDVERLKT) adopt a coiled-coil conformation. The helical transmembrane segment at 193-215 (TLQWVFGIVTGSGALLLAYVRLI) threads the bilayer.

The protein belongs to the CCDC90 family.

It localises to the mitochondrion. It is found in the membrane. The chain is Protein fmp32, mitochondrial (fmp32) from Schizosaccharomyces pombe (strain 972 / ATCC 24843) (Fission yeast).